Consider the following 350-residue polypeptide: DNA polymerase IV (350 aa).

One can recognise a UmuC domain in the interval 7–188; it reads IIHIDMDYFF…LPVKKLFGVG (182 aa). Mg(2+) is bound by residues D11 and D106. E107 is an active-site residue.

Belongs to the DNA polymerase type-Y family. As to quaternary structure, monomer. Requires Mg(2+) as cofactor.

The protein resides in the cytoplasm. The catalysed reaction is DNA(n) + a 2'-deoxyribonucleoside 5'-triphosphate = DNA(n+1) + diphosphate. Poorly processive, error-prone DNA polymerase involved in untargeted mutagenesis. Copies undamaged DNA at stalled replication forks, which arise in vivo from mismatched or misaligned primer ends. These misaligned primers can be extended by PolIV. Exhibits no 3'-5' exonuclease (proofreading) activity. May be involved in translesional synthesis, in conjunction with the beta clamp from PolIII. The chain is DNA polymerase IV from Francisella philomiragia subsp. philomiragia (strain ATCC 25017 / CCUG 19701 / FSC 153 / O#319-036).